Reading from the N-terminus, the 317-residue chain is Nicotianamine synthase (317 aa).

It belongs to the nicotianamine synthase (NAS)-like family. As to quaternary structure, homomultimer. As to expression, leaves and roots.

The enzyme catalyses 3 S-adenosyl-L-methionine = nicotianamine + 3 S-methyl-5'-thioadenosine + 3 H(+). Functionally, synthesizes nicotianamine, a polyamine that serves as a sensor for the physiological iron status within the plant, and/or might be involved in the transport of iron. The protein is Nicotianamine synthase (CHLN) of Solanum lycopersicum (Tomato).